A 510-amino-acid polypeptide reads, in one-letter code: Cobyric acid synthase (510 aa).

Residues 262 to 460 (EIKVGIIKLP…IHGIFENDEW (199 aa)) enclose the GATase cobBQ-type domain. Cys343 serves as the catalytic Nucleophile. The active site involves His452.

Belongs to the CobB/CobQ family. CobQ subfamily.

It participates in cofactor biosynthesis; adenosylcobalamin biosynthesis. Functionally, catalyzes amidations at positions B, D, E, and G on adenosylcobyrinic A,C-diamide. NH(2) groups are provided by glutamine, and one molecule of ATP is hydrogenolyzed for each amidation. In Prochlorococcus marinus (strain MIT 9515), this protein is Cobyric acid synthase.